A 94-amino-acid polypeptide reads, in one-letter code: Large ribosomal subunit protein uL23 (94 aa).

The protein belongs to the universal ribosomal protein uL23 family. As to quaternary structure, part of the 50S ribosomal subunit. Contacts protein L29, and trigger factor when it is bound to the ribosome.

One of the early assembly proteins it binds 23S rRNA. One of the proteins that surrounds the polypeptide exit tunnel on the outside of the ribosome. Forms the main docking site for trigger factor binding to the ribosome. The chain is Large ribosomal subunit protein uL23 from Roseiflexus castenholzii (strain DSM 13941 / HLO8).